A 364-amino-acid chain; its full sequence is Probable dual-specificity RNA methyltransferase RlmN (364 aa).

Glu107 (proton acceptor) is an active-site residue. Residues 113–346 (HEYGNSVCVT…ATIRREQGSD (234 aa)) form the Radical SAM core domain. The cysteines at positions 120 and 351 are disulfide-linked. Residues Cys127, Cys131, and Cys134 each coordinate [4Fe-4S] cluster. S-adenosyl-L-methionine is bound by residues 177-178 (GE), Ser209, 232-234 (SLH), and Asn308. The active-site S-methylcysteine intermediate is Cys351.

Belongs to the radical SAM superfamily. RlmN family. It depends on [4Fe-4S] cluster as a cofactor.

It localises to the cytoplasm. It catalyses the reaction adenosine(2503) in 23S rRNA + 2 reduced [2Fe-2S]-[ferredoxin] + 2 S-adenosyl-L-methionine = 2-methyladenosine(2503) in 23S rRNA + 5'-deoxyadenosine + L-methionine + 2 oxidized [2Fe-2S]-[ferredoxin] + S-adenosyl-L-homocysteine. The catalysed reaction is adenosine(37) in tRNA + 2 reduced [2Fe-2S]-[ferredoxin] + 2 S-adenosyl-L-methionine = 2-methyladenosine(37) in tRNA + 5'-deoxyadenosine + L-methionine + 2 oxidized [2Fe-2S]-[ferredoxin] + S-adenosyl-L-homocysteine. Specifically methylates position 2 of adenine 2503 in 23S rRNA and position 2 of adenine 37 in tRNAs. Confers resistance to some classes of antibiotics. In Staphylococcus epidermidis (strain ATCC 12228 / FDA PCI 1200), this protein is Probable dual-specificity RNA methyltransferase RlmN.